The sequence spans 612 residues: Kelch repeat and BTB domain-containing protein 3 (612 aa).

A BTB domain is found at 52 to 119; sequence YDFKIIMKDE…AYTGKTKITD (68 aa). One can recognise a BACK domain in the interval 150–250; it reads NLVNCLQLLS…VRLHQLSEET (101 aa). 5 Kelch repeats span residues 291–337, 339–390, 400–450, 452–502, and 548–595; these read STTE…GSSL, SYGE…STMK, MALD…PEAS, CQNV…ATLI, and GIED…FYCQ.

In Pongo abelii (Sumatran orangutan), this protein is Kelch repeat and BTB domain-containing protein 3.